The primary structure comprises 193 residues: Ribosome maturation factor RimM (193 aa).

The 76-residue stretch at 97-172 (DDEFYLTDLV…LILADPPALV (76 aa)) folds into the PRC barrel domain. Positions 168–193 (PPALVGDHEGPEEKGLDENEELGDRD) are disordered. A compositionally biased stretch (basic and acidic residues) spans 173 to 193 (GDHEGPEEKGLDENEELGDRD).

This sequence belongs to the RimM family. In terms of assembly, binds ribosomal protein uS19.

The protein localises to the cytoplasm. In terms of biological role, an accessory protein needed during the final step in the assembly of 30S ribosomal subunit, possibly for assembly of the head region. Essential for efficient processing of 16S rRNA. May be needed both before and after RbfA during the maturation of 16S rRNA. It has affinity for free ribosomal 30S subunits but not for 70S ribosomes. This Caulobacter vibrioides (strain ATCC 19089 / CIP 103742 / CB 15) (Caulobacter crescentus) protein is Ribosome maturation factor RimM.